An 89-amino-acid polypeptide reads, in one-letter code: Small ribosomal subunit protein uS17 (89 aa).

The protein belongs to the universal ribosomal protein uS17 family. In terms of assembly, part of the 30S ribosomal subunit.

In terms of biological role, one of the primary rRNA binding proteins, it binds specifically to the 5'-end of 16S ribosomal RNA. This chain is Small ribosomal subunit protein uS17, found in Ralstonia nicotianae (strain ATCC BAA-1114 / GMI1000) (Ralstonia solanacearum).